A 147-amino-acid polypeptide reads, in one-letter code: Hemoglobin subunit beta (147 aa).

Val-2 carries the N-acetylvaline modification. The region spanning 3-147 (NLTSDEKTAV…VANALAHKYH (145 aa)) is the Globin domain. Residue Ser-45 is modified to Phosphoserine. Lys-60 carries the N6-acetyllysine modification. His-64 serves as a coordination point for heme b. N6-acetyllysine is present on Lys-83. A heme b-binding site is contributed by His-93. Cys-94 carries the S-nitrosocysteine modification. An N6-acetyllysine modification is found at Lys-145.

This sequence belongs to the globin family. In terms of assembly, heterotetramer of two alpha chains and two beta chains. In terms of tissue distribution, red blood cells.

In terms of biological role, involved in oxygen transport from the lung to the various peripheral tissues. The protein is Hemoglobin subunit beta (HBB) of Dasypus novemcinctus (Nine-banded armadillo).